The primary structure comprises 273 residues: SUMO-1 cysteine protease S273R (273 aa).

Residues H168 and N187 contribute to the active site. Substrate is bound at residue Q226. The active-site Nucleophile is C232.

It belongs to the peptidase C63 family.

The protein localises to the host cytoplasm. It localises to the virion. Functionally, cysteine protease that plays several role during infection including processing of the structural polyprotein or inhibition of the host immune response. Catalyzes the maturation of the pp220 and pp62 polyprotein precursors into core-shell proteins. Plays a role in the disruption of host pyroptosis via specific cleavage of gasdermin D/GSDMD. In addition, strongly decreases the host cGAS-STING signaling by targeting IKBKE via its enzymatic activity. Also impairs host FOXJ1-mediated antiviral effect via degradation of FOXJ1. The polypeptide is SUMO-1 cysteine protease S273R (Ornithodoros (relapsing fever ticks)).